Here is a 115-residue protein sequence, read N- to C-terminus: Protein Wnt-2 (115 aa).

Residue S1 is the site of O-palmitoleoyl serine; by PORCN attachment. C81 and C96 are disulfide-bonded. N82 is a glycosylation site (N-linked (GlcNAc...) asparagine).

It belongs to the Wnt family. In terms of processing, palmitoleoylation is required for efficient binding to frizzled receptors. Depalmitoleoylation leads to Wnt signaling pathway inhibition.

It is found in the secreted. The protein localises to the extracellular space. It localises to the extracellular matrix. Its function is as follows. Ligand for members of the frizzled family of seven transmembrane receptors. Probable developmental protein. May be a signaling molecule which affects the development of discrete regions of tissues. Is likely to signal over only few cell diameters. This is Protein Wnt-2 (WNT-2) from Strongylocentrotus purpuratus (Purple sea urchin).